Consider the following 366-residue polypeptide: Putative F-box protein At1g26515 (366 aa).

Positions 1–20 are disordered; sequence MKTRSKKTKTENNQEKSKEK. The segment covering 8 to 20 has biased composition (basic and acidic residues); that stretch reads TKTENNQEKSKEK. Residues 20–66 form the F-box domain; sequence KNKFDQLPLDLEIEIFRRLPLKSVARFLTLSKSCAATIRSPSFITSF.

In Arabidopsis thaliana (Mouse-ear cress), this protein is Putative F-box protein At1g26515.